The primary structure comprises 92 residues: Large ribosomal subunit protein eL43 (92 aa).

The C4-type zinc finger occupies 39–60 (CQFCGKDAMKRQAVGIWGCKSC).

This sequence belongs to the eukaryotic ribosomal protein eL43 family.

The sequence is that of Large ribosomal subunit protein eL43 (RPL37A) from Cryptochiton stelleri (Giant gumboot chiton).